Consider the following 402-residue polypeptide: Phosphoglycerate kinase (402 aa).

Substrate-binding positions include 24–26 (DFN), arginine 40, 63–66 (HFGR), arginine 122, and arginine 155. Residues lysine 206, glycine 297, glutamate 328, and 357-360 (GGDS) contribute to the ATP site.

Belongs to the phosphoglycerate kinase family. In terms of assembly, monomer.

Its subcellular location is the cytoplasm. The enzyme catalyses (2R)-3-phosphoglycerate + ATP = (2R)-3-phospho-glyceroyl phosphate + ADP. It participates in carbohydrate degradation; glycolysis; pyruvate from D-glyceraldehyde 3-phosphate: step 2/5. The chain is Phosphoglycerate kinase from Synechococcus sp. (strain CC9311).